The chain runs to 141 residues: Endoribonuclease YbeY (141 aa).

The Zn(2+) site is built by histidine 105, histidine 109, and aspartate 115.

The protein belongs to the endoribonuclease YbeY family. Zn(2+) serves as cofactor.

It localises to the cytoplasm. In terms of biological role, single strand-specific metallo-endoribonuclease involved in late-stage 70S ribosome quality control and in maturation of the 3' terminus of the 16S rRNA. The polypeptide is Endoribonuclease YbeY (Chloroherpeton thalassium (strain ATCC 35110 / GB-78)).